A 291-amino-acid polypeptide reads, in one-letter code: Ribonuclease Z (291 aa).

Zn(2+)-binding residues include H60, H62, D64, H65, H132, D200, and H256. The active-site Proton acceptor is the D64.

The protein belongs to the RNase Z family. Homodimer. Requires Zn(2+) as cofactor.

The catalysed reaction is Endonucleolytic cleavage of RNA, removing extra 3' nucleotides from tRNA precursor, generating 3' termini of tRNAs. A 3'-hydroxy group is left at the tRNA terminus and a 5'-phosphoryl group is left at the trailer molecule.. In terms of biological role, zinc phosphodiesterase, which displays some tRNA 3'-processing endonuclease activity. Probably involved in tRNA maturation, by removing a 3'-trailer from precursor tRNA. The sequence is that of Ribonuclease Z from Metallosphaera sedula (strain ATCC 51363 / DSM 5348 / JCM 9185 / NBRC 15509 / TH2).